Reading from the N-terminus, the 314-residue chain is tRNA dimethylallyltransferase (314 aa).

Position 13-20 (13-20 (GPTAVGKT)) interacts with ATP. Residue 15–20 (TAVGKT) coordinates substrate. The tract at residues 38–41 (DSMQ) is interaction with substrate tRNA.

The protein belongs to the IPP transferase family. As to quaternary structure, monomer. Mg(2+) is required as a cofactor.

The catalysed reaction is adenosine(37) in tRNA + dimethylallyl diphosphate = N(6)-dimethylallyladenosine(37) in tRNA + diphosphate. Functionally, catalyzes the transfer of a dimethylallyl group onto the adenine at position 37 in tRNAs that read codons beginning with uridine, leading to the formation of N6-(dimethylallyl)adenosine (i(6)A). This is tRNA dimethylallyltransferase from Bacillus subtilis (strain 168).